The sequence spans 332 residues: Delta-aminolevulinic acid dehydratase (332 aa).

The active-site Schiff-base intermediate with substrate is Lys199. Residues Arg209 and Lys221 each contribute to the 5-aminolevulinate site. Glu237 is a Mg(2+) binding site. The active-site Schiff-base intermediate with substrate is Lys252. 5-aminolevulinate contacts are provided by Ser278 and Tyr317.

The protein belongs to the ALAD family. As to quaternary structure, homooctamer.

It catalyses the reaction 2 5-aminolevulinate = porphobilinogen + 2 H2O + H(+). It participates in porphyrin-containing compound metabolism; protoporphyrin-IX biosynthesis; coproporphyrinogen-III from 5-aminolevulinate: step 1/4. Its function is as follows. Catalyzes an early step in the biosynthesis of tetrapyrroles. Binds two molecules of 5-aminolevulinate per subunit, each at a distinct site, and catalyzes their condensation to form porphobilinogen. This chain is Delta-aminolevulinic acid dehydratase (hemB), found in Chlamydia pneumoniae (Chlamydophila pneumoniae).